The chain runs to 1481 residues: Cystic fibrosis transmembrane conductance regulator (1481 aa).

Residues 1-77 are Cytoplasmic-facing; that stretch reads MQRSPLEKAS…KLINALRRCF (77 aa). The helical transmembrane segment at 78 to 98 threads the bilayer; sequence FWRFMFYGILLYLGEVTKAVQ. The region spanning 81-365 is the ABC transmembrane type-1 1 domain; that stretch reads FMFYGILLYL…WAVQTWYDSL (285 aa). At 99 to 122 the chain is on the extracellular side; sequence PLLLGRIIASYDPDNKVERSIAIY. A helical transmembrane segment spans residues 123 to 146; it reads LGIGLCLLFIVRMLLLHPAIFGLH. Residues 147 to 195 are Cytoplasmic-facing; that stretch reads HIGMQMRIAMFSLIYKKILKLSSRVLDKISIGQLVSLLSNNLNKFDEGL. Residues 196–216 traverse the membrane as a helical segment; it reads ALAHFVWIAPLQVMLLMGLLW. Topologically, residues 217–222 are extracellular; that stretch reads ELLQAS. Residues 223–243 traverse the membrane as a helical segment; it reads AFCGLGFLIVLALFQSGLGRM. At 244–298 the chain is on the cytoplasmic side; sequence MMKYRDQRAGKINERLVITSEMIENIQSVKAYCWEEAMEKMIENLRQTELKLTRK. The helical transmembrane segment at 299–319 threads the bilayer; that stretch reads AAYVRYFNSSAFFFSGFFVVF. Over 320 to 339 the chain is Extracellular; it reads LSVLPYALIKGIILRKIFTT. A helical transmembrane segment spans residues 340–358; it reads ISFCIVLRMAVTRQFPWAV. The Cytoplasmic segment spans residues 359-858; it reads QTWYDSLGAI…YLRYITVHKS (500 aa). ATP-binding positions include W401, 458-465, and Q493; that span reads GSTGAGKT. Positions 423-646 constitute an ABC transporter 1 domain; that stretch reads NGDNSLFFSN…RPDFSSKLMG (224 aa). A lipid anchor (S-palmitoyl cysteine) is attached at C524. Phosphoserine is present on residues S549 and S660. The interval 654 to 831 is disordered R region; that stretch reads SAERRNSILT…EEINEEDLKE (178 aa). Phosphoserine; by PKA is present on S670. Phosphoserine is present on S686. K688 is covalently cross-linked (Glycyl lysine isopeptide (Lys-Gly) (interchain with G-Cter in ubiquitin)). 2 positions are modified to phosphoserine: S700 and S712. T717 bears the Phosphothreonine mark. Phosphoserine occurs at positions 737, 768, 790, 795, and 813. A helical membrane pass occupies residues 859 to 879; it reads LIFVLIWCLVIFLAEVAVSLV. An ABC transmembrane type-1 2 domain is found at 859–1155; sequence LIFVLIWCLV…AVNSSIDVDS (297 aa). At 880 to 918 the chain is on the extracellular side; the sequence is LLWLLGNAPAYNKGNSTISANSSYAVIITSTSAYYVFYI. 2 N-linked (GlcNAc...) asparagine glycosylation sites follow: N894 and N900. Residues 919–939 traverse the membrane as a discontinuously helical segment; that stretch reads YVGVADTLLALGFFRGLPLVH. Residues 940–990 lie on the Cytoplasmic side of the membrane; the sequence is TLITVSKILHHKMLHSVLQAPMSTLNALKAGGILNRFSKDIAILDDLLPLT. The helical transmembrane segment at 991 to 1011 threads the bilayer; that stretch reads IFDFIQLLLIVIGAVAVVSVL. Over 1012 to 1013 the chain is Extracellular; sequence QP. Residues 1014 to 1034 traverse the membrane as a helical segment; sequence YIFLATVPVIVTFIILRAYFL. Residues 1035–1095 are Cytoplasmic-facing; the sequence is HTSQQLKQLE…TANWFLYLST (61 aa). The helical transmembrane segment at 1096–1116 threads the bilayer; sequence LRWFQMRIEMVFVIFFIVVTF. Residues 1117–1130 lie on the Extracellular side of the membrane; it reads ISILTTGEGEGQVG. The helical transmembrane segment at 1131-1151 threads the bilayer; the sequence is IILTLAMNIMGTLQWAVNSSI. Residues 1152 to 1481 are Cytoplasmic-facing; the sequence is DVDSLMRSVS…TEEEVQDTRL (330 aa). An ABC transporter 2 domain is found at 1211–1444; it reads MTVKDLTARY…KSLFRQAISP (234 aa). Residues Y1220 and 1245–1252 contribute to the ATP site; that span reads GRTGSGKS. The interval 1387–1481 is interaction with GORASP2; it reads RTLKQAFADC…TEEEVQDTRL (95 aa). The S-palmitoyl cysteine moiety is linked to residue C1396. Phosphoserine occurs at positions 1445 and 1457. Residues 1449 to 1481 form a disordered region; the sequence is KLFPRRNSSKHKSRPPITALKEETEEEVQDTRL. Residues 1450 to 1462 show a composition bias toward basic residues; that stretch reads LFPRRNSSKHKSR. Over residues 1471–1481 the composition is skewed to acidic residues; sequence ETEEEVQDTRL. The PDZ-binding signature appears at 1479–1481; it reads TRL.

This sequence belongs to the ABC transporter superfamily. ABCC family. CFTR transporter (TC 3.A.1.202) subfamily. As to quaternary structure, monomer; does not require oligomerization for channel activity. May form oligomers in the membrane. Interacts with SLC26A3, SLC26A6 and NHERF1. Interacts with SHANK2. Interacts with MYO6. Interacts (via C-terminus) with GOPC (via PDZ domain); this promotes CFTR internalization and thereby decreases channel activity. Interacts with SLC4A7 through NHERF1. Found in a complex with MYO5B and RAB11A. Interacts with ANO1. Interacts with SLC26A8. Interacts with AHCYL1; the interaction increases CFTR activity. Interacts with CSE1L. The core-glycosylated form interacts with GORASP2 (via PDZ GRASP-type 1 domain) in respone to ER stress. Interacts with MARCHF2; the interaction leads to CFTR ubiqtuitination and degradation. Interacts with ADGRG2. Post-translationally, N-glycosylated. Phosphorylated; cAMP treatment promotes phosphorylation and activates the channel. Dephosphorylation decreases the ATPase activity (in vitro). Phosphorylation at PKA sites activates the channel. Phosphorylation at PKC sites enhances the response to phosphorylation by PKA. Phosphorylated by AMPK; this inhibits channel activity. In terms of processing, ubiquitinated, leading to its degradation in the lysosome. Deubiquitination by USP10 in early endosomes enhances its endocytic recycling to the cell membrane. Ubiquitinated by RNF185 during ER stress. Ubiquitinated by MARCHF2.

The protein localises to the apical cell membrane. Its subcellular location is the early endosome membrane. It localises to the cell membrane. It is found in the recycling endosome membrane. The protein resides in the endoplasmic reticulum membrane. The protein localises to the nucleus. It carries out the reaction ATP + H2O + closed Cl(-) channel = ADP + phosphate + open Cl(-) channel.. The catalysed reaction is chloride(in) = chloride(out). It catalyses the reaction hydrogencarbonate(in) = hydrogencarbonate(out). The enzyme catalyses ATP + H2O = ADP + phosphate + H(+). Epithelial ion channel that plays an important role in the regulation of epithelial ion and water transport and fluid homeostasis. Mediates the transport of chloride ions across the cell membrane. Possesses an intrinsic ATPase activity and utilizes ATP to gate its channel; the passive flow of anions through the channel is gated by cycles of ATP binding and hydrolysis by the ATP-binding domains. The ion channel is also permeable to HCO(3)(-); selectivity depends on the extracellular chloride concentration. Exerts its function also by modulating the activity of other ion channels and transporters. Contributes to the regulation of the pH and the ion content of the epithelial fluid layer. Modulates the activity of the epithelial sodium channel (ENaC) complex, in part by regulating the cell surface expression of the ENaC complex. May regulate bicarbonate secretion and salvage in epithelial cells by regulating the transporter SLC4A7. Can inhibit the chloride channel activity of ANO1. Plays a role in the chloride and bicarbonate homeostasis during sperm epididymal maturation and capacitation. In Microcebus murinus (Gray mouse lemur), this protein is Cystic fibrosis transmembrane conductance regulator.